Consider the following 254-residue polypeptide: Homeobox protein Nkx-6.3 (254 aa).

2 disordered regions span residues 112–140 (QDWR…RPTF) and 191–228 (KSAV…DPDS). Positions 120-129 (ALSSASNTEG) are enriched in polar residues. Residues 133–192 (KKHTRPTFTGHQIFALEKTFEQTKYLAGPERARLAFSLGMSESQVKVWFQNRRTKWRKKS) constitute a DNA-binding region (homeobox).

It localises to the nucleus. Putative transcription factor, which may be involved in patterning of central nervous system and pancreas. The protein is Homeobox protein Nkx-6.3 (nkx6-3) of Xenopus laevis (African clawed frog).